The primary structure comprises 156 residues: Cyclic pyranopterin monophosphate synthase (156 aa).

Substrate is bound by residues 75–77 and 111–112; these read LCH and ME. Residue D126 is part of the active site.

It belongs to the MoaC family. Homohexamer; trimer of dimers.

It catalyses the reaction (8S)-3',8-cyclo-7,8-dihydroguanosine 5'-triphosphate = cyclic pyranopterin phosphate + diphosphate. It participates in cofactor biosynthesis; molybdopterin biosynthesis. Catalyzes the conversion of (8S)-3',8-cyclo-7,8-dihydroguanosine 5'-triphosphate to cyclic pyranopterin monophosphate (cPMP). The polypeptide is Cyclic pyranopterin monophosphate synthase (Erythrobacter litoralis (strain HTCC2594)).